A 788-amino-acid chain; its full sequence is E3 ubiquitin-protein ligase SspH2 (788 aa).

The interaction with host membrane and with target proteins stretch occupies residues Met-1–Phe-481. LRR repeat units lie at residues His-223–Pro-242, Glu-243–Leu-264, Leu-265–Ser-282, Gly-283–Pro-302, Gly-303–Leu-324, Cys-325–Ser-342, Gly-343–Leu-364, Tyr-365–Ser-382, Gly-383–Leu-404, Lys-405–Ser-422, Gly-423–Ser-445, and Ser-446–Arg-466. Positions Asp-482–Glu-491 are linker. Residues Thr-492–Asn-788 are E3 ubiquitin-protein ligase catalytic domain. Residues Ala-494 to Asn-788 enclose the NEL domain. Cys-580 functions as the Glycyl thioester intermediate in the catalytic mechanism.

This sequence belongs to the LRR-containing bacterial E3 ligase family. Post-translationally, ubiquitinated in the presence of host E1 ubiquitin-activating enzyme UBA1, E2 ubiquitin-conjugating enzyme UBE2D2 and ubiquitin.

It is found in the secreted. Its subcellular location is the host cytoplasm. The protein resides in the host apical cell membrane. It catalyses the reaction S-ubiquitinyl-[E2 ubiquitin-conjugating enzyme]-L-cysteine + [acceptor protein]-L-lysine = [E2 ubiquitin-conjugating enzyme]-L-cysteine + N(6)-ubiquitinyl-[acceptor protein]-L-lysine.. Exists in an autoinhibited state in the absence of substrate protein, due to interactions of the leucine-rich repeat domain with the catalytic domain. Is activated upon binding to a substrate protein. Effector proteins function to alter host cell physiology and promote bacterial survival in host tissues. This protein is an E3 ubiquitin ligase that interferes with host's ubiquitination pathway. The polypeptide is E3 ubiquitin-protein ligase SspH2 (sspH2) (Salmonella typhimurium (strain LT2 / SGSC1412 / ATCC 700720)).